Here is a 407-residue protein sequence, read N- to C-terminus: uncharacterized protein (407 aa).

Positions 10–37 form a coiled coil; it reads DKLEQLANDVVTELTDMENKYKDLHVEL.

This is an uncharacterized protein from Bacillus subtilis (strain 168).